We begin with the raw amino-acid sequence, 324 residues long: Glutathione synthetase (324 aa).

The ATP-grasp domain maps to 129–313; it reads KLYALHFPDL…LEDEIVDWLV (185 aa). 155–211 provides a ligand contact to ATP; it reads VDIHGRAVIKPLDGKGGEGIFLLARADRNLNAIIEASTAYGTRHVMVQRYLEESRQG. Positions 284 and 286 each coordinate Mg(2+).

It belongs to the prokaryotic GSH synthase family. Mg(2+) serves as cofactor. The cofactor is Mn(2+).

The catalysed reaction is gamma-L-glutamyl-L-cysteine + glycine + ATP = glutathione + ADP + phosphate + H(+). Its pathway is sulfur metabolism; glutathione biosynthesis; glutathione from L-cysteine and L-glutamate: step 2/2. The sequence is that of Glutathione synthetase from Gloeobacter violaceus (strain ATCC 29082 / PCC 7421).